A 510-amino-acid chain; its full sequence is ATP synthase subunit alpha (510 aa).

Residue 169–176 participates in ATP binding; sequence GDRQTGKT.

This sequence belongs to the ATPase alpha/beta chains family. F-type ATPases have 2 components, CF(1) - the catalytic core - and CF(0) - the membrane proton channel. CF(1) has five subunits: alpha(3), beta(3), gamma(1), delta(1), epsilon(1). CF(0) has four main subunits: a(1), b(1), b'(1) and c(9-12).

It localises to the cell inner membrane. It catalyses the reaction ATP + H2O + 4 H(+)(in) = ADP + phosphate + 5 H(+)(out). In terms of biological role, produces ATP from ADP in the presence of a proton gradient across the membrane. The alpha chain is a regulatory subunit. This is ATP synthase subunit alpha from Rhodopseudomonas palustris (strain BisA53).